Reading from the N-terminus, the 396-residue chain is 1-deoxy-D-xylulose 5-phosphate reductoisomerase (396 aa).

Residues Thr10, Gly11, Ser12, Ile13, and Asn123 each coordinate NADPH. Residue Lys124 participates in 1-deoxy-D-xylulose 5-phosphate binding. An NADPH-binding site is contributed by Glu125. Asp149 provides a ligand contact to Mn(2+). 1-deoxy-D-xylulose 5-phosphate-binding residues include Ser150, Glu151, Ser185, and His208. A Mn(2+)-binding site is contributed by Glu151. Gly214 lines the NADPH pocket. 1-deoxy-D-xylulose 5-phosphate contacts are provided by Ser221, Asn226, Lys227, and Glu230. Glu230 contributes to the Mn(2+) binding site.

This sequence belongs to the DXR family. It depends on Mg(2+) as a cofactor. Mn(2+) is required as a cofactor.

The catalysed reaction is 2-C-methyl-D-erythritol 4-phosphate + NADP(+) = 1-deoxy-D-xylulose 5-phosphate + NADPH + H(+). Its pathway is isoprenoid biosynthesis; isopentenyl diphosphate biosynthesis via DXP pathway; isopentenyl diphosphate from 1-deoxy-D-xylulose 5-phosphate: step 1/6. Catalyzes the NADPH-dependent rearrangement and reduction of 1-deoxy-D-xylulose-5-phosphate (DXP) to 2-C-methyl-D-erythritol 4-phosphate (MEP). The polypeptide is 1-deoxy-D-xylulose 5-phosphate reductoisomerase (Shewanella frigidimarina (strain NCIMB 400)).